The sequence spans 505 residues: Serine/threonine protein kinase OSK1 (505 aa).

The 253-residue stretch at 14-266 (YRIGKTLGIG…IREIREHQWF (253 aa)) folds into the Protein kinase domain. ATP is bound by residues 20–28 (LGIGSFGKV) and K43. Residue D137 is the Proton acceptor of the active site. In terms of domain architecture, UBA spans 287 to 327 (KLDDETLNDVINMGFDKNQLIESLHKRLQNEATVAYYLLLD). Residues 347 to 361 (SSLAQVTPAETPNSA) show a composition bias toward polar residues. The tract at residues 347 to 372 (SSLAQVTPAETPNSATDHRQHGHMES) is disordered. The KA1 domain occupies 456–504 (SEKSTHTVKFEIQLYKTRDEKYLLDLQRVSGPQLLFLDLCSAFLTQLRV).

This sequence belongs to the protein kinase superfamily. Ser/Thr protein kinase family. Expressed in young roots, young shoots, flowers, and immature seeds. Mostly expressed in leaf sheaths and roots, and to a lower extent, in germinating seeds, leaf blades and panicles.

Its subcellular location is the nucleus. It catalyses the reaction L-seryl-[protein] + ATP = O-phospho-L-seryl-[protein] + ADP + H(+). The enzyme catalyses L-threonyl-[protein] + ATP = O-phospho-L-threonyl-[protein] + ADP + H(+). Its function is as follows. Serine/threonine-protein kinase involved in sugar signaling during germination and seedling growth. Negative regulators of sugar response complex (SRC) in alpha-amylase gene promoters, thus relieving SRC sugar repression in a MYBS1-dependent manner. Required for MYBS1 and AAMY3 accumulation under glucose starvation. The polypeptide is Serine/threonine protein kinase OSK1 (Oryza sativa subsp. japonica (Rice)).